Consider the following 447-residue polypeptide: Argininosuccinate synthase (447 aa).

Residues Ala-17–Ser-25 and Ala-43 contribute to the ATP site. Tyr-99 contacts L-citrulline. ATP is bound by residues Gly-129 and Thr-131. The L-aspartate site is built by Thr-131, Asn-135, and Asp-136. Position 135 (Asn-135) interacts with L-citrulline. Position 136 (Asp-136) interacts with ATP. 2 residues coordinate L-citrulline: Arg-139 and Ser-192. Asp-194 serves as a coordination point for ATP. 3 residues coordinate L-citrulline: Thr-201, Glu-203, and Glu-280.

The protein belongs to the argininosuccinate synthase family. Type 2 subfamily. As to quaternary structure, homotetramer.

Its subcellular location is the cytoplasm. The enzyme catalyses L-citrulline + L-aspartate + ATP = 2-(N(omega)-L-arginino)succinate + AMP + diphosphate + H(+). Its pathway is amino-acid biosynthesis; L-arginine biosynthesis; L-arginine from L-ornithine and carbamoyl phosphate: step 2/3. The sequence is that of Argininosuccinate synthase from Salmonella agona (strain SL483).